We begin with the raw amino-acid sequence, 473 residues long: MDQHQLDEENQRAALFHSSAPSSSLGADGEEERETVPLLSCKMADDKSDTVQVSEDTAHQISIDPWYQVGFILTTGVNSAYVLGYSASIMVPLGWIGGTCGLILAAAISMYANALLAHLHEVGGKRHIRYRDLAGHIYGRKMYSLTWALQYVNLFMINTGLIILAGQALKAIYVLFRDDGVLKLPYCIALSGFVCALFAFGIPYLSALRIWLGLSTVFSLIYIMIAFVMSLRDGITTPAKDYTIPGSHSDRIFTTIGAVANLVFAYNTGMLPEIQATIRPPVVKNMEKALWFQFTVGSLPLYAVTFMGYWAYGSSTSSYLLNSVKGPIWIKTVANLSAFLQTVIALHIFASPMYEFLDTRFGSGHGGPFAIHNIMFRVGVRGGYLTVNTLVAAMLPFLGDFMSLTGALSTFPLTFVLANHMYLTVKQNKMSIFRKCWHWLNVVGFSCLSVAAAVAAVRLITVDYSTYHLFADM.

Over residues 1-11 (MDQHQLDEENQ) the composition is skewed to basic and acidic residues. Positions 1-31 (MDQHQLDEENQRAALFHSSAPSSSLGADGEE) are disordered. A run of 11 helical transmembrane segments spans residues 65 to 85 (PWYQ…VLGY), 88 to 108 (SIMV…AAAI), 145 to 165 (LTWA…IILA), 188 to 208 (IALS…LSAL), 210 to 230 (IWLG…FVMS), 252 to 272 (IFTT…GMLP), 290 to 310 (LWFQ…MGYW), 333 to 353 (VANL…ASPM), 378 to 398 (VGVR…LPFL), 401 to 421 (FMSL…ANHM), and 437 to 457 (WHWL…VAAV).

This sequence belongs to the amino acid/polyamine transporter 2 family. Amino acid/auxin permease (AAAP) (TC 2.A.18.3) subfamily. In terms of tissue distribution, expressed in roots, leaf blades and sheaths, stems and young panicle.

Its subcellular location is the cell membrane. Its function is as follows. Proline transporter that mediates proline transport across the plasma membrane when expressed in a heterologous system (Xenopus oocytes). The chain is Proline transporter 1 (PROT1) from Oryza sativa subsp. japonica (Rice).